We begin with the raw amino-acid sequence, 398 residues long: Arylacetamide deacetylase (398 aa).

Residues 1–5 (MGKTI) lie on the Cytoplasmic side of the membrane. Residues 6–26 (SLLISVVLVAYYLYIPLPDAI) form a helical; Signal-anchor for type II membrane protein membrane-spanning segment. At 27-398 (EEPWKVVWET…QYLSWLIKNL (372 aa)) the chain is on the lumenal side. The short motif at 110 to 112 (HGG) is the Involved in the stabilization of the negatively charged intermediate by the formation of the oxyanion hole element. An intrachain disulfide couples C115 to C339. The active site involves S188. N281 is a glycosylation site (N-linked (GlcNAc...) asparagine). Catalysis depends on residues D342 and H372.

It belongs to the 'GDXG' lipolytic enzyme family. N-glycosylated. Highest levels in liver with lower levels in jejunum and kidney.

The protein resides in the endoplasmic reticulum membrane. Its subcellular location is the microsome membrane. The catalysed reaction is a triacylglycerol + H2O = a diacylglycerol + a fatty acid + H(+). In terms of biological role, displays cellular triglyceride lipase activity in liver, increases the levels of intracellular fatty acids derived from the hydrolysis of newly formed triglyceride stores and plays a role in very low-density lipoprotein assembly. Displays serine esterase activity in liver. Deacetylates a variety of arylacetamide substrates, including xenobiotic compounds and procarcinogens, converting them to the primary arylamide compounds and increasing their toxicity. The protein is Arylacetamide deacetylase (Aadac) of Mus musculus (Mouse).